A 375-amino-acid polypeptide reads, in one-letter code: Succinyl-diaminopimelate desuccinylase (375 aa).

His66 is a Zn(2+) binding site. Residue Asp68 is part of the active site. Asp99 contributes to the Zn(2+) binding site. Glu133 functions as the Proton acceptor in the catalytic mechanism. 3 residues coordinate Zn(2+): Glu134, Glu162, and His348.

This sequence belongs to the peptidase M20A family. DapE subfamily. As to quaternary structure, homodimer. The cofactor is Zn(2+). Co(2+) serves as cofactor.

It catalyses the reaction N-succinyl-(2S,6S)-2,6-diaminopimelate + H2O = (2S,6S)-2,6-diaminopimelate + succinate. It functions in the pathway amino-acid biosynthesis; L-lysine biosynthesis via DAP pathway; LL-2,6-diaminopimelate from (S)-tetrahydrodipicolinate (succinylase route): step 3/3. Catalyzes the hydrolysis of N-succinyl-L,L-diaminopimelic acid (SDAP), forming succinate and LL-2,6-diaminopimelate (DAP), an intermediate involved in the bacterial biosynthesis of lysine and meso-diaminopimelic acid, an essential component of bacterial cell walls. The sequence is that of Succinyl-diaminopimelate desuccinylase from Buchnera aphidicola subsp. Acyrthosiphon pisum (strain APS) (Acyrthosiphon pisum symbiotic bacterium).